A 285-amino-acid polypeptide reads, in one-letter code: Acetyl-coenzyme A carboxylase carboxyl transferase subunit beta (285 aa).

The 257-residue stretch at 29-285 (IMTKCPKCKK…ILKIHQEVSN (257 aa)) folds into the CoA carboxyltransferase N-terminal domain. Positions 33, 36, 52, and 55 each coordinate Zn(2+). The segment at 33 to 55 (CPKCKKIMYTKELNENLNVCFNC) adopts a C4-type zinc-finger fold.

It belongs to the AccD/PCCB family. As to quaternary structure, acetyl-CoA carboxylase is a heterohexamer composed of biotin carboxyl carrier protein (AccB), biotin carboxylase (AccC) and two subunits each of ACCase subunit alpha (AccA) and ACCase subunit beta (AccD). Requires Zn(2+) as cofactor.

Its subcellular location is the cytoplasm. It catalyses the reaction N(6)-carboxybiotinyl-L-lysyl-[protein] + acetyl-CoA = N(6)-biotinyl-L-lysyl-[protein] + malonyl-CoA. It functions in the pathway lipid metabolism; malonyl-CoA biosynthesis; malonyl-CoA from acetyl-CoA: step 1/1. Component of the acetyl coenzyme A carboxylase (ACC) complex. Biotin carboxylase (BC) catalyzes the carboxylation of biotin on its carrier protein (BCCP) and then the CO(2) group is transferred by the transcarboxylase to acetyl-CoA to form malonyl-CoA. The sequence is that of Acetyl-coenzyme A carboxylase carboxyl transferase subunit beta from Staphylococcus epidermidis (strain ATCC 12228 / FDA PCI 1200).